The primary structure comprises 203 residues: E3 ubiquitin-protein ligase RNF152 (203 aa).

The segment at C12 to R55 adopts an RING-type zinc-finger fold. Positions I106–T165 are necessary for interaction with RRAGA. A helical membrane pass occupies residues S167–L187.

It belongs to the RNF152 family. As to quaternary structure, interacts with RRAGA (inactive GDP-bound form); stimulated by amino acid starvation. Interacts with SEC16A. In terms of processing, ubiquitinated. Autoubiquitinated in vitro, leading to its degradation by the proteasome. Widely expressed.

The protein resides in the lysosome membrane. The enzyme catalyses S-ubiquitinyl-[E2 ubiquitin-conjugating enzyme]-L-cysteine + [acceptor protein]-L-lysine = [E2 ubiquitin-conjugating enzyme]-L-cysteine + N(6)-ubiquitinyl-[acceptor protein]-L-lysine.. Its pathway is protein modification; protein ubiquitination. E3 ubiquitin-protein ligase that acts as a negative regulator of mTORC1 signaling by mediating ubiquitination of RagA/RRAGA and RHEB. Catalyzes 'Lys-63'-linked polyubiquitination of RagA/RRAGA in response to amino acid starvation, thereby regulating mTORC1 signaling. Also mediates monoubiquitination of RHEB, promoting its association with the TSC-TBC complex and subsequent inhibition. Also mediates 'Lys-48'-linked polyubiquitination of target proteins and their subsequent targeting to the proteasome for degradation. Induces apoptosis when overexpressed. This is E3 ubiquitin-protein ligase RNF152 from Homo sapiens (Human).